Consider the following 311-residue polypeptide: Protease HtpX homolog 1 (311 aa).

A run of 2 helical transmembrane segments spans residues 12–32 (VISLGLTIISEGIVLIGIASL) and 35–55 (ISLFFIFPALVIFWLFQWIIS). Position 137 (His-137) interacts with Zn(2+). The active site involves Glu-138. A Zn(2+)-binding site is contributed by His-141. Transmembrane regions (helical) follow at residues 159–179 (VLGYISTLLMNFGYLALFLAA) and 184–204 (LLFAIAALAIGFVIFVVTFIL). Glu-216 lines the Zn(2+) pocket.

The protein belongs to the peptidase M48B family. Requires Zn(2+) as cofactor.

It localises to the cell membrane. This Saccharolobus solfataricus (strain ATCC 35092 / DSM 1617 / JCM 11322 / P2) (Sulfolobus solfataricus) protein is Protease HtpX homolog 1.